The following is a 123-amino-acid chain: Small ribosomal subunit protein uS13 (123 aa).

The interval 94-123 (GLPVRGQSTKSNARTRKGPRKTVAGKKSTK) is disordered. Positions 106 to 123 (ARTRKGPRKTVAGKKSTK) are enriched in basic residues.

The protein belongs to the universal ribosomal protein uS13 family. In terms of assembly, part of the 30S ribosomal subunit. Forms a loose heterodimer with protein S19. Forms two bridges to the 50S subunit in the 70S ribosome.

Its function is as follows. Located at the top of the head of the 30S subunit, it contacts several helices of the 16S rRNA. In the 70S ribosome it contacts the 23S rRNA (bridge B1a) and protein L5 of the 50S subunit (bridge B1b), connecting the 2 subunits; these bridges are implicated in subunit movement. Contacts the tRNAs in the A and P-sites. The sequence is that of Small ribosomal subunit protein uS13 from Mycoplasmopsis agalactiae (strain NCTC 10123 / CIP 59.7 / PG2) (Mycoplasma agalactiae).